We begin with the raw amino-acid sequence, 362 residues long: Heat-inducible transcription repressor HrcA (362 aa).

The protein belongs to the HrcA family.

Negative regulator of class I heat shock genes (grpE-dnaK-dnaJ and groELS operons). Prevents heat-shock induction of these operons. The sequence is that of Heat-inducible transcription repressor HrcA from Bradyrhizobium diazoefficiens (strain JCM 10833 / BCRC 13528 / IAM 13628 / NBRC 14792 / USDA 110).